Consider the following 406-residue polypeptide: Peptidyl-alpha-hydroxyglycine alpha-amidating lyase 2 (406 aa).

An N-terminal signal peptide occupies residues 1–19 (MSRLLFVALLAISLGYVAS). 4 NHL repeats span residues 168–209 (GAIK…FKPF), 218–261 (GKRF…FNAA), 264–308 (LLRT…PKAG), and 358–402 (DPRS…RVWK). 2 cysteine pairs are disulfide-bonded: Cys-231/Cys-251 and Cys-293/Cys-304.

The protein belongs to the peptidyl-alpha-hydroxyglycine alpha-amidating lyase family. The cofactor is Zn(2+). Post-translationally, N-glycosylated. As to expression, only found in a subset of neurons distributed throughout all levels of the central nervous system (CNS). Present in at least some neuroendocrine cells. In adult brains, it is only present in a small handful of cells, the majority of which being distributed in distal parts of the medulla, with a higher expression in the posterior surface of the brain (at protein level).

Its subcellular location is the secreted. The catalysed reaction is a [peptide]-C-terminal (2S)-2-hydroxyglycine = a [peptide]-C-terminal amide + glyoxylate. In terms of biological role, peptidyl-alpha-hydroxylglycine alpha-amidating lyase that catalyzes an essential reaction in C-terminal alpha-amidation of peptides. Mediates the dismutation of the unstable peptidyl(2-hydroxyglycine) intermediate to glyoxylate and the corresponding desglycine peptide amide. C-terminal amidation of peptides such as neuropeptides is essential for full biological activity. This is Peptidyl-alpha-hydroxyglycine alpha-amidating lyase 2 (Pal2) from Drosophila melanogaster (Fruit fly).